We begin with the raw amino-acid sequence, 389 residues long: Na(+)/H(+) antiporter NhaA 1 (389 aa).

Transmembrane regions (helical) follow at residues 12–32 (VLNE…ALLV), 62–82 (FLLW…GLEL), 97–117 (IVLP…LFAL), 128–148 (GWAI…MMCG), 157–177 (IFLL…IAIF), 184–204 (IVAF…NILG), 220–240 (ISVL…AFFI), 260–280 (FWLA…VNLS), 282–302 (IDIG…LFVG), 331–351 (LYGV…IDGL), and 365–385 (LAIL…LKFF).

The protein belongs to the NhaA Na(+)/H(+) (TC 2.A.33) antiporter family.

The protein localises to the cell inner membrane. It catalyses the reaction Na(+)(in) + 2 H(+)(out) = Na(+)(out) + 2 H(+)(in). In terms of biological role, na(+)/H(+) antiporter that extrudes sodium in exchange for external protons. The chain is Na(+)/H(+) antiporter NhaA 1 from Campylobacter jejuni subsp. jejuni serotype O:6 (strain 81116 / NCTC 11828).